Consider the following 89-residue polypeptide: Small ribosomal subunit protein uS15 (89 aa).

The tract at residues Met-1–Gly-23 is disordered.

Belongs to the universal ribosomal protein uS15 family. Part of the 30S ribosomal subunit. Forms a bridge to the 50S subunit in the 70S ribosome, contacting the 23S rRNA.

In terms of biological role, one of the primary rRNA binding proteins, it binds directly to 16S rRNA where it helps nucleate assembly of the platform of the 30S subunit by binding and bridging several RNA helices of the 16S rRNA. Functionally, forms an intersubunit bridge (bridge B4) with the 23S rRNA of the 50S subunit in the ribosome. The protein is Small ribosomal subunit protein uS15 of Prochlorococcus marinus (strain SARG / CCMP1375 / SS120).